The following is a 238-amino-acid chain: tRNA (guanine-N(7)-)-methyltransferase (238 aa).

Positions 68, 93, 120, and 143 each coordinate S-adenosyl-L-methionine. D143 is a catalytic residue. Residues K147, D179, and 216-219 (TKFE) contribute to the substrate site.

The protein belongs to the class I-like SAM-binding methyltransferase superfamily. TrmB family.

The enzyme catalyses guanosine(46) in tRNA + S-adenosyl-L-methionine = N(7)-methylguanosine(46) in tRNA + S-adenosyl-L-homocysteine. It functions in the pathway tRNA modification; N(7)-methylguanine-tRNA biosynthesis. Functionally, catalyzes the formation of N(7)-methylguanine at position 46 (m7G46) in tRNA. The polypeptide is tRNA (guanine-N(7)-)-methyltransferase (Shewanella oneidensis (strain ATCC 700550 / JCM 31522 / CIP 106686 / LMG 19005 / NCIMB 14063 / MR-1)).